We begin with the raw amino-acid sequence, 425 residues long: Glutamyl-tRNA(Gln) amidotransferase subunit D (425 aa).

Positions 53–84 (ENNGEAANGGNGGKNGQKEPEPAKEKVSKPGL) are disordered. Over residues 68–80 (GQKEPEPAKEKVS) the composition is skewed to basic and acidic residues. Residues 85–414 (PKVSILSTGG…EKAVSMLGEN (330 aa)) enclose the Asparaginase/glutaminase domain. Catalysis depends on residues Thr-95, Thr-171, Asp-172, and Lys-248.

It belongs to the asparaginase 1 family. GatD subfamily. Heterodimer of GatD and GatE.

It catalyses the reaction L-glutamyl-tRNA(Gln) + L-glutamine + ATP + H2O = L-glutaminyl-tRNA(Gln) + L-glutamate + ADP + phosphate + H(+). In terms of biological role, allows the formation of correctly charged Gln-tRNA(Gln) through the transamidation of misacylated Glu-tRNA(Gln) in organisms which lack glutaminyl-tRNA synthetase. The reaction takes place in the presence of glutamine and ATP through an activated gamma-phospho-Glu-tRNA(Gln). The GatDE system is specific for glutamate and does not act on aspartate. This Methanosarcina mazei (strain ATCC BAA-159 / DSM 3647 / Goe1 / Go1 / JCM 11833 / OCM 88) (Methanosarcina frisia) protein is Glutamyl-tRNA(Gln) amidotransferase subunit D.